The primary structure comprises 284 residues: uncharacterized protein (284 aa).

Belongs to the IIV-6 436R family.

This is an uncharacterized protein from Invertebrate iridescent virus 3 (IIV-3).